The primary structure comprises 349 residues: 4-hydroxy-3-methylbut-2-en-1-yl diphosphate synthase (flavodoxin) (349 aa).

Residues C264, C267, C299, and E306 each contribute to the [4Fe-4S] cluster site.

This sequence belongs to the IspG family. [4Fe-4S] cluster serves as cofactor.

The catalysed reaction is (2E)-4-hydroxy-3-methylbut-2-enyl diphosphate + oxidized [flavodoxin] + H2O + 2 H(+) = 2-C-methyl-D-erythritol 2,4-cyclic diphosphate + reduced [flavodoxin]. The protein operates within isoprenoid biosynthesis; isopentenyl diphosphate biosynthesis via DXP pathway; isopentenyl diphosphate from 1-deoxy-D-xylulose 5-phosphate: step 5/6. Functionally, converts 2C-methyl-D-erythritol 2,4-cyclodiphosphate (ME-2,4cPP) into 1-hydroxy-2-methyl-2-(E)-butenyl 4-diphosphate. The polypeptide is 4-hydroxy-3-methylbut-2-en-1-yl diphosphate synthase (flavodoxin) (Clostridium perfringens (strain 13 / Type A)).